The primary structure comprises 917 residues: DNA topoisomerase 1 beta (917 aa).

Residues 1-368 are disordered; that stretch reads MATEAFVKPV…SLPSGDGQKK (368 aa). Polar residues predominate over residues 32 to 63; it reads RNSNTAATTNRPSPINNAMRNSAIGSTKSSPP. The segment covering 66-82 has biased composition (low complexity); sequence SPLTSPNRSASSSTRSS. A compositionally biased stretch (polar residues) spans 89 to 100; sequence PSSSSVQRSTLK. Basic and acidic residues-rich tracts occupy residues 102–116 and 134–149; these read PLRDDRSVVAKERNG and DKPLSARLKLDSKEVT. The segment covering 150-170 has biased composition (polar residues); the sequence is KQPSSSGRGSTQQAVQKSNMR. A compositionally biased stretch (basic and acidic residues) spans 177–187; the sequence is YTKKKVLDERA. Residues 189–205 show a composition bias toward polar residues; sequence MSSTVQTKTSVGTSSSK. Basic and acidic residues-rich tracts occupy residues 256 to 265 and 296 to 307; these read KLSEPARPVK and VKEDNSDGDDHV. Ser301 carries the phosphoserine modification. The span at 316 to 338 shows a compositional bias: low complexity; the sequence is DSSNNKSSSAKPSSSKMIASSSR. Interaction with DNA stretches follow at residues 575–576, 638–643, and 729–731; these read KY, RAGNEK, and TAK. Residues 582-912 form the Topo IB-type catalytic domain; the sequence is SSSLKGQSDK…MDVDPEFRFC (331 aa). Residues 779 to 858 are a coiled coil; it reads VSKSHGAQVE…ERDMQTKEDM (80 aa). Tyr870 (O-(3'-phospho-DNA)-tyrosine intermediate) is an active-site residue.

The protein belongs to the type IB topoisomerase family.

It localises to the nucleus. The enzyme catalyses ATP-independent breakage of single-stranded DNA, followed by passage and rejoining.. Functionally, releases the supercoiling and torsional tension of DNA introduced during the DNA replication and transcription by transiently cleaving and rejoining one strand of the DNA duplex. Introduces a single-strand break via transesterification at a target site in duplex DNA. The scissile phosphodiester is attacked by the catalytic tyrosine of the enzyme, resulting in the formation of a DNA-(3'-phosphotyrosyl)-enzyme intermediate and the expulsion of a 5'-OH DNA strand. The free DNA strand then rotates around the intact phosphodiester bond on the opposing strand, thus removing DNA supercoils. Finally, in the religation step, the DNA 5'-OH attacks the covalent intermediate to expel the active-site tyrosine and restore the DNA phosphodiester backbone. Topoisomerases 1 enzymes (TOP1A and TOP1B) are essential for plant survival. The sequence is that of DNA topoisomerase 1 beta from Arabidopsis thaliana (Mouse-ear cress).